The chain runs to 293 residues: Protease HtpX homolog (293 aa).

The next 2 helical transmembrane spans lie at 4–24 (IFLF…TMRI) and 38–58 (LTGL…ISLL). H146 lines the Zn(2+) pocket. E147 is a catalytic residue. H150 is a Zn(2+) binding site. The next 2 helical transmembrane spans lie at 161 to 181 (LIQG…GYFV) and 198 to 218 (ATVI…VAWF). Residue E223 participates in Zn(2+) binding.

The protein belongs to the peptidase M48B family. The cofactor is Zn(2+).

Its subcellular location is the cell inner membrane. This chain is Protease HtpX homolog, found in Bordetella parapertussis (strain 12822 / ATCC BAA-587 / NCTC 13253).